We begin with the raw amino-acid sequence, 315 residues long: Ribosomal RNA small subunit methyltransferase H (315 aa).

Residues 37–39, Asp-57, Phe-83, Asp-105, and Gln-112 contribute to the S-adenosyl-L-methionine site; that span reads GGH. Positions 296–315 are disordered; the sequence is EVKANPRSRSAVMRVAEKVR.

It belongs to the methyltransferase superfamily. RsmH family.

It is found in the cytoplasm. It carries out the reaction cytidine(1402) in 16S rRNA + S-adenosyl-L-methionine = N(4)-methylcytidine(1402) in 16S rRNA + S-adenosyl-L-homocysteine + H(+). Its function is as follows. Specifically methylates the N4 position of cytidine in position 1402 (C1402) of 16S rRNA. In Stutzerimonas stutzeri (strain A1501) (Pseudomonas stutzeri), this protein is Ribosomal RNA small subunit methyltransferase H.